The primary structure comprises 148 residues: D-aminoacyl-tRNA deacylase (148 aa).

The Gly-cisPro motif, important for rejection of L-amino acids signature appears at 137–138; sequence GP.

The protein belongs to the DTD family. In terms of assembly, homodimer.

Its subcellular location is the cytoplasm. The enzyme catalyses glycyl-tRNA(Ala) + H2O = tRNA(Ala) + glycine + H(+). It carries out the reaction a D-aminoacyl-tRNA + H2O = a tRNA + a D-alpha-amino acid + H(+). Functionally, an aminoacyl-tRNA editing enzyme that deacylates mischarged D-aminoacyl-tRNAs. Also deacylates mischarged glycyl-tRNA(Ala), protecting cells against glycine mischarging by AlaRS. Acts via tRNA-based rather than protein-based catalysis; rejects L-amino acids rather than detecting D-amino acids in the active site. By recycling D-aminoacyl-tRNA to D-amino acids and free tRNA molecules, this enzyme counteracts the toxicity associated with the formation of D-aminoacyl-tRNA entities in vivo and helps enforce protein L-homochirality. This Enterococcus faecalis (strain ATCC 700802 / V583) protein is D-aminoacyl-tRNA deacylase.